Here is a 341-residue protein sequence, read N- to C-terminus: Abnormal cell lineage protein 44 (341 aa).

Residues 1 to 21 form the signal peptide; sequence MRALYFRTTTLSTFFILCSLA. Disulfide bonds link cysteine 84–cysteine 95, cysteine 134–cysteine 142, cysteine 144–cysteine 158, cysteine 206–cysteine 220, cysteine 208–cysteine 215, cysteine 265–cysteine 292, cysteine 275–cysteine 287, cysteine 291–cysteine 331, cysteine 307–cysteine 322, cysteine 309–cysteine 319, and cysteine 314–cysteine 315. Serine 212 carries O-palmitoleoyl serine; by mom-1 lipidation. A glycan (N-linked (GlcNAc...) asparagine) is linked at asparagine 279.

This sequence belongs to the Wnt family. Palmitoleoylation is required for efficient binding to frizzled receptors. Depalmitoleoylation leads to Wnt signaling pathway inhibition.

The protein resides in the secreted. Its subcellular location is the extracellular space. The protein localises to the extracellular matrix. In terms of biological role, ligand for members of the frizzled family of seven transmembrane receptors. Affects male tail development, vulval precursor cell specification and egg laying. Involved in morphogenesis by influencing polarity of asymmetric cell divisions of the B, U, and F cells in the male, and the T cell in males and hermaphrodites. Controls spindle orientation in B-gamma cell division during male copulatory spicule development. Involved in specification of the P7.p lineage during vulval development. Has a role in providing polarity and default lin-17 localization in axon development and positioning of neuromuscular synapses in DA9 regions by negatively regulating synaptogenesis. This chain is Abnormal cell lineage protein 44, found in Caenorhabditis briggsae.